The following is a 101-amino-acid chain: Small ribosomal subunit protein uS14 (101 aa).

This sequence belongs to the universal ribosomal protein uS14 family. As to quaternary structure, part of the 30S ribosomal subunit. Contacts proteins S3 and S10.

In terms of biological role, binds 16S rRNA, required for the assembly of 30S particles and may also be responsible for determining the conformation of the 16S rRNA at the A site. This chain is Small ribosomal subunit protein uS14, found in Cupriavidus necator (strain ATCC 17699 / DSM 428 / KCTC 22496 / NCIMB 10442 / H16 / Stanier 337) (Ralstonia eutropha).